We begin with the raw amino-acid sequence, 609 residues long: PTS system beta-glucoside-specific EIIBCA component (609 aa).

Residues 1 to 86 enclose the PTS EIIB type-1 domain; the sequence is MDYDKLSKDI…VRHSNLSDEK (86 aa). Catalysis depends on cysteine 26, which acts as the Phosphocysteine intermediate; for EIIB activity. The 357-residue stretch at 103–459 folds into the PTS EIIC type-1 domain; the sequence is DVISGVFTPI…GSQQPAVHEG (357 aa). The next 10 helical transmembrane spans lie at 112-132, 141-161, 174-194, 202-222, 246-266, 281-301, 321-341, 351-371, 379-399, and 412-432; these read ILPA…AVTF, VHVI…LLLA, VAAA…LGAG, LPVT…SIWI, FTLL…GAIL, AGLV…MTGM, LLPA…AVFL, LALT…MYGV, FAAA…TGVA, and IPVF…IAFA. The region spanning 480 to 584 is the PTS EIIA type-1 domain; sequence DGVFSAGVMG…DVITPVIVTN (105 aa). Histidine 532 (tele-phosphohistidine intermediate; for EIIA activity) is an active-site residue.

The protein resides in the cell membrane. Its function is as follows. The phosphoenolpyruvate-dependent sugar phosphotransferase system (sugar PTS), a major carbohydrate active -transport system, catalyzes the phosphorylation of incoming sugar substrates concomitantly with their translocation across the cell membrane. This system is involved in beta-glucoside transport. This chain is PTS system beta-glucoside-specific EIIBCA component (bglP), found in Bacillus subtilis (strain 168).